A 24-amino-acid chain; its full sequence is TPDHREVPSFSSRWEPNFGLTFSK.

This sequence belongs to the attacin/sarcotoxin-2 family.

Its subcellular location is the secreted. Its function is as follows. Hemolymph antibacterial protein. The protein is Attacin of Heliothis virescens (Tobacco budworm moth).